The chain runs to 141 residues: Cystatin (141 aa).

Positions 1–26 (MLHSQLPVAAPLRLLCALLLLPSVTM) are cleaved as a signal peptide. The Cystatin domain maps to 29–129 (GGLSPRSVTD…CRFQVWSRPW (101 aa)). Residues 73-77 (QVVTG) carry the Secondary area of contact motif. Disulfide bonds link Cys-91–Cys-107 and Cys-120–Cys-140.

This sequence belongs to the cystatin family. Expressed at a low level by the venom gland (at protein level).

The protein resides in the secreted. Its function is as follows. Inhibits various C1 cysteine proteases including cathepsin L, papain and cathepsin B. This protein has no toxic activity and its function in the venom is unknown. It may play a role as a housekeeping or regulatory protein. This is Cystatin from Hoplocephalus stephensii (Stephens's banded snake).